Consider the following 103-residue polypeptide: Phosphoribosyl-ATP pyrophosphatase (103 aa).

The protein belongs to the PRA-PH family.

It localises to the cytoplasm. It catalyses the reaction 1-(5-phospho-beta-D-ribosyl)-ATP + H2O = 1-(5-phospho-beta-D-ribosyl)-5'-AMP + diphosphate + H(+). Its pathway is amino-acid biosynthesis; L-histidine biosynthesis; L-histidine from 5-phospho-alpha-D-ribose 1-diphosphate: step 2/9. This chain is Phosphoribosyl-ATP pyrophosphatase, found in Cereibacter sphaeroides (strain ATCC 17025 / ATH 2.4.3) (Rhodobacter sphaeroides).